The sequence spans 338 residues: Ketol-acid reductoisomerase (NADP(+)) (338 aa).

The KARI N-terminal Rossmann domain maps to 1–181 (MKVFYDKDCD…GGGRTGIIET (181 aa)). NADP(+) contacts are provided by residues 24 to 27 (YGSQ), R47, S50, T52, and 82 to 85 (DEFQ). H107 is an active-site residue. An NADP(+)-binding site is contributed by G133. In terms of domain architecture, KARI C-terminal knotted spans 182–327 (TFKDETETDL…EQLRSMMPWI (146 aa)). Mg(2+) contacts are provided by D190, E194, E226, and E230. Position 251 (S251) interacts with substrate.

Belongs to the ketol-acid reductoisomerase family. Mg(2+) serves as cofactor.

The enzyme catalyses (2R)-2,3-dihydroxy-3-methylbutanoate + NADP(+) = (2S)-2-acetolactate + NADPH + H(+). It catalyses the reaction (2R,3R)-2,3-dihydroxy-3-methylpentanoate + NADP(+) = (S)-2-ethyl-2-hydroxy-3-oxobutanoate + NADPH + H(+). The protein operates within amino-acid biosynthesis; L-isoleucine biosynthesis; L-isoleucine from 2-oxobutanoate: step 2/4. It participates in amino-acid biosynthesis; L-valine biosynthesis; L-valine from pyruvate: step 2/4. Involved in the biosynthesis of branched-chain amino acids (BCAA). Catalyzes an alkyl-migration followed by a ketol-acid reduction of (S)-2-acetolactate (S2AL) to yield (R)-2,3-dihydroxy-isovalerate. In the isomerase reaction, S2AL is rearranged via a Mg-dependent methyl migration to produce 3-hydroxy-3-methyl-2-ketobutyrate (HMKB). In the reductase reaction, this 2-ketoacid undergoes a metal-dependent reduction by NADPH to yield (R)-2,3-dihydroxy-isovalerate. This chain is Ketol-acid reductoisomerase (NADP(+)), found in Pseudomonas putida (strain ATCC 700007 / DSM 6899 / JCM 31910 / BCRC 17059 / LMG 24140 / F1).